Here is a 55-residue protein sequence, read N- to C-terminus: Protein CADMIUM TOLERANCE 1 (55 aa).

A helical membrane pass occupies residues 24–40 (GCLYACIFTALCCFCCY).

Belongs to the CYSTM1 family.

It is found in the cell membrane. Its subcellular location is the secreted. The protein resides in the cell wall. Its function is as follows. Confers resistance to heavy metal ions (e.g. cadmium (CdCl(2)) and copper (CuCl(2))) by chelating them at the plasma membrane of root cells, thus stopping their entry and reducing their accumulation. In Echinochloa crus-galli subsp. caudata (Cockspur), this protein is Protein CADMIUM TOLERANCE 1.